We begin with the raw amino-acid sequence, 570 residues long: Sulfite reductase [NADPH] hemoprotein beta-component (570 aa).

Cysteine 434, cysteine 440, cysteine 479, and cysteine 483 together coordinate [4Fe-4S] cluster. Residue cysteine 483 coordinates siroheme.

Belongs to the nitrite and sulfite reductase 4Fe-4S domain family. Alpha(8)-beta(8). The alpha component is a flavoprotein, the beta component is a hemoprotein. The cofactor is siroheme. [4Fe-4S] cluster serves as cofactor.

The enzyme catalyses hydrogen sulfide + 3 NADP(+) + 3 H2O = sulfite + 3 NADPH + 4 H(+). Its pathway is sulfur metabolism; hydrogen sulfide biosynthesis; hydrogen sulfide from sulfite (NADPH route): step 1/1. Its function is as follows. Component of the sulfite reductase complex that catalyzes the 6-electron reduction of sulfite to sulfide. This is one of several activities required for the biosynthesis of L-cysteine from sulfate. This Salmonella enteritidis PT4 (strain P125109) protein is Sulfite reductase [NADPH] hemoprotein beta-component.